Reading from the N-terminus, the 228-residue chain is Cytochrome c oxidase subunit 2 (228 aa).

The Mitochondrial intermembrane portion of the chain corresponds to 1-14 (MANHSQLGFQDASS). The helical transmembrane segment at 15–45 (PIMEELVEFHDHALIVALAICSLVLYLLAHM) threads the bilayer. The Mitochondrial matrix segment spans residues 46 to 58 (LMEKLSSNAVDAQ). The chain crosses the membrane as a helical span at residues 59-86 (EVELIWTILPAIVLVLLALPSLQILYMM). Residues 87 to 228 (DEIDEPDLTL…EAWSSLLSSS (142 aa)) are Mitochondrial intermembrane-facing. Residues His160, Cys195, Glu197, Cys199, His203, and Met206 each contribute to the Cu cation site. Glu197 is a binding site for Mg(2+).

This sequence belongs to the cytochrome c oxidase subunit 2 family. Component of the cytochrome c oxidase (complex IV, CIV), a multisubunit enzyme composed of 14 subunits. The complex is composed of a catalytic core of 3 subunits MT-CO1, MT-CO2 and MT-CO3, encoded in the mitochondrial DNA, and 11 supernumerary subunits COX4I, COX5A, COX5B, COX6A, COX6B, COX6C, COX7A, COX7B, COX7C, COX8 and NDUFA4, which are encoded in the nuclear genome. The complex exists as a monomer or a dimer and forms supercomplexes (SCs) in the inner mitochondrial membrane with NADH-ubiquinone oxidoreductase (complex I, CI) and ubiquinol-cytochrome c oxidoreductase (cytochrome b-c1 complex, complex III, CIII), resulting in different assemblies (supercomplex SCI(1)III(2)IV(1) and megacomplex MCI(2)III(2)IV(2)). Found in a complex with TMEM177, COA6, COX18, COX20, SCO1 and SCO2. Interacts with TMEM177 in a COX20-dependent manner. Interacts with COX20. Interacts with COX16. Cu cation is required as a cofactor.

It is found in the mitochondrion inner membrane. The enzyme catalyses 4 Fe(II)-[cytochrome c] + O2 + 8 H(+)(in) = 4 Fe(III)-[cytochrome c] + 2 H2O + 4 H(+)(out). Its function is as follows. Component of the cytochrome c oxidase, the last enzyme in the mitochondrial electron transport chain which drives oxidative phosphorylation. The respiratory chain contains 3 multisubunit complexes succinate dehydrogenase (complex II, CII), ubiquinol-cytochrome c oxidoreductase (cytochrome b-c1 complex, complex III, CIII) and cytochrome c oxidase (complex IV, CIV), that cooperate to transfer electrons derived from NADH and succinate to molecular oxygen, creating an electrochemical gradient over the inner membrane that drives transmembrane transport and the ATP synthase. Cytochrome c oxidase is the component of the respiratory chain that catalyzes the reduction of oxygen to water. Electrons originating from reduced cytochrome c in the intermembrane space (IMS) are transferred via the dinuclear copper A center (CU(A)) of subunit 2 and heme A of subunit 1 to the active site in subunit 1, a binuclear center (BNC) formed by heme A3 and copper B (CU(B)). The BNC reduces molecular oxygen to 2 water molecules using 4 electrons from cytochrome c in the IMS and 4 protons from the mitochondrial matrix. The polypeptide is Cytochrome c oxidase subunit 2 (MT-CO2) (Anas platyrhynchos (Mallard)).